The chain runs to 910 residues: Staphylococcal nuclease domain-containing protein 1 (910 aa).

Ala-2 bears the N-acetylalanine mark. 3 TNase-like domains span residues 18-166 (TVQR…MWSE), 193-328 (KPVN…IWRD), and 341-496 (KQFV…LHSK). Phosphothreonine is present on Thr-103. Lys-193 bears the N6-acetyllysine mark. Thr-240 bears the Phosphothreonine mark. 2 consecutive short sequence motifs (nuclear localization signal) follow at residues 321–325 (RRLRI) and 388–392 (KKLRP). The residue at position 426 (Ser-426) is a Phosphoserine. Lys-513 participates in a covalent cross-link: Glycyl lysine isopeptide (Lys-Gly) (interchain with G-Cter in SUMO2). The region spanning 525 to 660 (GRSEAVVEYV…KQKKEKVWAH (136 aa)) is the TNase-like 4 domain. Residue Lys-641 is modified to N6-acetyllysine. The residue at position 645 (Ser-645) is a Phosphoserine. A Tudor domain is found at 729–787 (APRRGEFCIAKFVDGEWYRARVEKVESPAKVHVFYIDYGNREILPSTRLGTLPPAFSTR). Thr-779 carries the phosphothreonine modification. Phosphoserine is present on residues Ser-785 and Ser-909.

Forms a ternary complex with STAT6 and POLR2A. Associates with the RNA-induced silencing complex (RISC). Interacts with the RISC components AGO2, FMR1 and TNRC6A. Interacts with GTF2E1 and GTF2E2. Interacts with PIM1. Interacts with STAT5. Interacts with SYT11 (via C2 2 domain); the interaction with SYT11 is direct. Phosphorylated by PIM1 in vitro. In lactating cows highly expressed in mammary epithelial cells.

Its subcellular location is the cytoplasm. The protein resides in the nucleus. It localises to the melanosome. It carries out the reaction Endonucleolytic cleavage to nucleoside 3'-phosphates and 3'-phosphooligonucleotide end-products.. Endonuclease that mediates miRNA decay of both protein-free and AGO2-loaded miRNAs. As part of its function in miRNA decay, regulates mRNAs involved in G1-to-S phase transition. Functions as a bridging factor between STAT6 and the basal transcription factor. Plays a role in PIM1 regulation of MYB activity. Functions as a transcriptional coactivator for STAT5. The polypeptide is Staphylococcal nuclease domain-containing protein 1 (SND1) (Bos taurus (Bovine)).